Here is a 132-residue protein sequence, read N- to C-terminus: Small ribosomal subunit protein uS8 (132 aa).

This sequence belongs to the universal ribosomal protein uS8 family. Part of the 30S ribosomal subunit. Contacts proteins S5 and S12.

In terms of biological role, one of the primary rRNA binding proteins, it binds directly to 16S rRNA central domain where it helps coordinate assembly of the platform of the 30S subunit. The protein is Small ribosomal subunit protein uS8 of Acidobacterium capsulatum (strain ATCC 51196 / DSM 11244 / BCRC 80197 / JCM 7670 / NBRC 15755 / NCIMB 13165 / 161).